The following is a 214-amino-acid chain: Large ribosomal subunit protein uL3 (214 aa).

Positions 136-156 are disordered; sequence THGNSLSHRAPGSIGQNQTPG. Gln153 bears the N5-methylglutamine mark.

This sequence belongs to the universal ribosomal protein uL3 family. In terms of assembly, part of the 50S ribosomal subunit. Forms a cluster with proteins L14 and L19. In terms of processing, methylated by PrmB.

Its function is as follows. One of the primary rRNA binding proteins, it binds directly near the 3'-end of the 23S rRNA, where it nucleates assembly of the 50S subunit. This Thioalkalivibrio sulfidiphilus (strain HL-EbGR7) protein is Large ribosomal subunit protein uL3.